The chain runs to 211 residues: Large ribosomal subunit protein uL4 (211 aa).

Polar residues predominate over residues 41 to 52 (QTNARQGTASTK). The interval 41-78 (QTNARQGTASTKTRAEVRGGGRKPWRQKGTGRARAGSI) is disordered. The span at 60–71 (GGRKPWRQKGTG) shows a compositional bias: basic residues.

This sequence belongs to the universal ribosomal protein uL4 family. As to quaternary structure, part of the 50S ribosomal subunit.

In terms of biological role, one of the primary rRNA binding proteins, this protein initially binds near the 5'-end of the 23S rRNA. It is important during the early stages of 50S assembly. It makes multiple contacts with different domains of the 23S rRNA in the assembled 50S subunit and ribosome. Functionally, forms part of the polypeptide exit tunnel. This is Large ribosomal subunit protein uL4 from Rippkaea orientalis (strain PCC 8801 / RF-1) (Cyanothece sp. (strain PCC 8801)).